Here is an 876-residue protein sequence, read N- to C-terminus: Valine--tRNA ligase (876 aa).

A 'HIGH' region motif is present at residues 43–53 (PNVTGVLHMGH). A 'KMSKS' region motif is present at residues 533-537 (KMSKS). Lysine 536 is a binding site for ATP. Residues 804–876 (GALIDVEEEI…DSLNQLQSTK (73 aa)) are a coiled coil.

The protein belongs to the class-I aminoacyl-tRNA synthetase family. ValS type 1 subfamily. As to quaternary structure, monomer.

It is found in the cytoplasm. The enzyme catalyses tRNA(Val) + L-valine + ATP = L-valyl-tRNA(Val) + AMP + diphosphate. Catalyzes the attachment of valine to tRNA(Val). As ValRS can inadvertently accommodate and process structurally similar amino acids such as threonine, to avoid such errors, it has a 'posttransfer' editing activity that hydrolyzes mischarged Thr-tRNA(Val) in a tRNA-dependent manner. This Porphyromonas gingivalis (strain ATCC 33277 / DSM 20709 / CIP 103683 / JCM 12257 / NCTC 11834 / 2561) protein is Valine--tRNA ligase.